The chain runs to 144 residues: L-fucose mutarotase (144 aa).

Catalysis depends on H22, which acts as the Proton donor. Substrate contacts are provided by residues D30, R109, and Y131 to N133.

It belongs to the RbsD / FucU family. FucU mutarotase subfamily. In terms of assembly, homodecamer.

The protein localises to the cytoplasm. The enzyme catalyses alpha-L-fucose = beta-L-fucose. It functions in the pathway carbohydrate metabolism; L-fucose metabolism. In terms of biological role, involved in the anomeric conversion of L-fucose. This Histophilus somni (strain 2336) (Haemophilus somnus) protein is L-fucose mutarotase.